Reading from the N-terminus, the 315-residue chain is Acetyl-coenzyme A carboxylase carboxyl transferase subunit alpha (315 aa).

The 255-residue stretch at R39–M293 folds into the CoA carboxyltransferase C-terminal domain.

The protein belongs to the AccA family. Acetyl-CoA carboxylase is a heterohexamer composed of biotin carboxyl carrier protein (AccB), biotin carboxylase (AccC) and two subunits each of ACCase subunit alpha (AccA) and ACCase subunit beta (AccD).

It is found in the cytoplasm. The catalysed reaction is N(6)-carboxybiotinyl-L-lysyl-[protein] + acetyl-CoA = N(6)-biotinyl-L-lysyl-[protein] + malonyl-CoA. The protein operates within lipid metabolism; malonyl-CoA biosynthesis; malonyl-CoA from acetyl-CoA: step 1/1. In terms of biological role, component of the acetyl coenzyme A carboxylase (ACC) complex. First, biotin carboxylase catalyzes the carboxylation of biotin on its carrier protein (BCCP) and then the CO(2) group is transferred by the carboxyltransferase to acetyl-CoA to form malonyl-CoA. The polypeptide is Acetyl-coenzyme A carboxylase carboxyl transferase subunit alpha (Pseudomonas fluorescens (strain SBW25)).